Consider the following 936-residue polypeptide: Isoleucine--tRNA ligase (936 aa).

The 'HIGH' region signature appears at 58-68 (PYANGRAHLGT). E561 provides a ligand contact to L-isoleucyl-5'-AMP. Residues 602 to 606 (KMSKS) carry the 'KMSKS' region motif. K605 is a binding site for ATP. The Zn(2+) site is built by C899, C902, C919, and C922.

The protein belongs to the class-I aminoacyl-tRNA synthetase family. IleS type 1 subfamily. Monomer. It depends on Zn(2+) as a cofactor.

The protein localises to the cytoplasm. It carries out the reaction tRNA(Ile) + L-isoleucine + ATP = L-isoleucyl-tRNA(Ile) + AMP + diphosphate. In terms of biological role, catalyzes the attachment of isoleucine to tRNA(Ile). As IleRS can inadvertently accommodate and process structurally similar amino acids such as valine, to avoid such errors it has two additional distinct tRNA(Ile)-dependent editing activities. One activity is designated as 'pretransfer' editing and involves the hydrolysis of activated Val-AMP. The other activity is designated 'posttransfer' editing and involves deacylation of mischarged Val-tRNA(Ile). In Coxiella burnetii (strain Dugway 5J108-111), this protein is Isoleucine--tRNA ligase.